The sequence spans 132 residues: Intraflagellar transport protein 20 homolog (132 aa).

Residues 70 to 132 (MKAIGARNLL…EFIDQFIFQK (63 aa)) are IFT57-binding. Residues 74-116 (GARNLLKSIAKQREAQQQQLQALIAEKKTQLERYRVEYEALCK) adopt a coiled-coil conformation.

As to quaternary structure, component of the IFT complex B, at least composed of IFT20, IFT22, IFT25, IFT27, IFT46, IFT52, TRAF3IP1/IFT54, IFT57, IFT74, IFT80, IFT81, and IFT88. Interacts directly with IFT57 and KIF3B/Kinesin II subunit. Interacts with IFT88. Interacts with CEP83. Interacts with SPEF2 (via C-terminus). Interacts with CBL and CBLB. Interacts with TRIP11. Interacts with TTC21A. Interacts with SPATA1. Interacts with USH1G. Interacts with CCDC146. Interacts with CEP78; regulating IFT20 stability and localization. Expressed predominantly in the testis (at protein level). Expressed in kidney and retina. Expression is up-regulated during spermiogenesis.

The protein localises to the golgi apparatus. It is found in the cis-Golgi network. The protein resides in the cytoplasm. It localises to the cytoskeleton. Its subcellular location is the microtubule organizing center. The protein localises to the centrosome. It is found in the centriole. The protein resides in the cilium basal body. It localises to the cell projection. Its subcellular location is the cilium. The protein localises to the cytoplasmic vesicle. It is found in the secretory vesicle. The protein resides in the acrosome. Functionally, part of intraflagellar transport (IFT) particles involved in ciliary process assembly. May play a role in the trafficking of ciliary membrane proteins from the Golgi complex to the cilium. Regulates the ciliary platelet-derived growth factor receptor-alpha (PDGFRA) signaling pathway. Required for protein stability of E3 ubiquitin ligases CBL and CBLB that mediate ubiquitination and internalization of PDGFRA for proper feedback inhibition of PDGFRA signaling. Essential for male fertility. Plays an important role in spermatogenesis, particularly spermiogenesis, when germ cells form flagella. May play a role in the transport of flagellar proteins ODF2 and SPAG16 to build sperm flagella and in the removal of redundant sperm cytoplasm. Also involved in autophagy since it is required for trafficking of ATG16L and the expansion of the autophagic compartment. The protein is Intraflagellar transport protein 20 homolog (Ift20) of Mus musculus (Mouse).